Here is a 162-residue protein sequence, read N- to C-terminus: 2-C-methyl-D-erythritol 2,4-cyclodiphosphate synthase (162 aa).

Positions 8 and 10 each coordinate a divalent metal cation. 4-CDP-2-C-methyl-D-erythritol 2-phosphate contacts are provided by residues 8–10 (DVH) and 34–35 (HS). H42 serves as a coordination point for a divalent metal cation. 4-CDP-2-C-methyl-D-erythritol 2-phosphate contacts are provided by residues 56–58 (DIG), 61–65 (FPDND), 132–135 (TTTE), F139, and K142.

It belongs to the IspF family. As to quaternary structure, homotrimer. A divalent metal cation is required as a cofactor.

The catalysed reaction is 4-CDP-2-C-methyl-D-erythritol 2-phosphate = 2-C-methyl-D-erythritol 2,4-cyclic diphosphate + CMP. It functions in the pathway isoprenoid biosynthesis; isopentenyl diphosphate biosynthesis via DXP pathway; isopentenyl diphosphate from 1-deoxy-D-xylulose 5-phosphate: step 4/6. Functionally, involved in the biosynthesis of isopentenyl diphosphate (IPP) and dimethylallyl diphosphate (DMAPP), two major building blocks of isoprenoid compounds. Catalyzes the conversion of 4-diphosphocytidyl-2-C-methyl-D-erythritol 2-phosphate (CDP-ME2P) to 2-C-methyl-D-erythritol 2,4-cyclodiphosphate (ME-CPP) with a corresponding release of cytidine 5-monophosphate (CMP). The polypeptide is 2-C-methyl-D-erythritol 2,4-cyclodiphosphate synthase (Pelotomaculum thermopropionicum (strain DSM 13744 / JCM 10971 / SI)).